A 497-amino-acid chain; its full sequence is Ammonium transporter 1 (497 aa).

The Extracellular segment spans residues 1-32 (MSSTTDATPTPSGVNGGDSMTVNLNQFYNNGD). Residues 33–53 (VAWILTSTALVFIMIPGVGFF) form a helical membrane-spanning segment. Topologically, residues 54–63 (YSGLARRRSA) are cytoplasmic. A helical membrane pass occupies residues 64–84 (ISMLFLSMMSVAIVAFQWFFW). At 85 to 122 (GYSLTFSHEGGPYIGSLANFGLRQTLGRPSSGASSVPD) the chain is on the extracellular side. Residues 123 to 143 (ILFCVFQGMFAAITPALAIGA) form a helical membrane-spanning segment. Residues 144–150 (AADRGRM) lie on the Cytoplasmic side of the membrane. The helical transmembrane segment at 151 to 171 (FPCMVFMFLWTSIVYDPIAFW) threads the bilayer. Topologically, residues 172-187 (TWNPNGWLNKLGSYDF) are extracellular. The chain crosses the membrane as a helical span at residues 188–208 (AGGSPVHISSGMAALAYSIVI). The Cytoplasmic segment spans residues 209-223 (GKRCDHGTTKYRPHN). The chain crosses the membrane as a helical span at residues 224–244 (VPHVVLGTVFLWFGWFGFNGG). The Extracellular portion of the chain corresponds to 245–253 (SSAAANMRG). Residues 254–274 (VMAVVVTHLAASVGGIVWCVI) form a helical membrane-spanning segment. Over 275–281 (DFAKNRH) the chain is Cytoplasmic. Residues 282-302 (WSVVGFCEGAVAGLVAITPGS) form a helical membrane-spanning segment. Position 303 (Gly303) is a topological domain, extracellular. The helical transmembrane segment at 304–324 (FVPPWAAVVIGALGAVFCYAA) threads the bilayer. At 325 to 338 (TYLKKIIRVDDALD) the chain is on the cytoplasmic side. The chain crosses the membrane as a helical span at residues 339-359 (IFAEHGVGGMVGNILTALFAA). The Extracellular segment spans residues 360-394 (DYIEALDGSGTAYTGGWITHHYIQLGYQLADTVSC). Residues 395–415 (AAYSFAVSCALLFVMNYIPGL) traverse the membrane as a helical segment. Residues 416-497 (SLRVSREDEV…AESEAQAPAI (82 aa)) are Cytoplasmic-facing. The segment at 440-497 (YKDSTDEPPPITTSGVQYTSPTVSDSASNEKEQEHRAQNEAQKEEEYRAESEAQAPAI) is disordered. A compositionally biased stretch (polar residues) spans 451–466 (TTSGVQYTSPTVSDSA). Residues 467–490 (SNEKEQEHRAQNEAQKEEEYRAES) show a composition bias toward basic and acidic residues.

This sequence belongs to the ammonia transporter channel (TC 1.A.11.2) family.

The protein resides in the membrane. Transporter for ammonium to use as a nitrogen source. Under ammonium limitation acts as an ammonium sensor, generating a signal that leads to pseudohyphal growth. In Schizosaccharomyces pombe (strain 972 / ATCC 24843) (Fission yeast), this protein is Ammonium transporter 1 (amt1).